A 466-amino-acid chain; its full sequence is Zinc metalloproteinase/disintegrin (466 aa).

A signal peptide spans phenylalanine 1 to serine 6. A propeptide spanning residues serine 7–valine 174 is cleaved from the precursor. The Peptidase M12B domain occupies arginine 180–proline 377. Positions 183 and 267 each coordinate Ca(2+). 3 disulfide bridges follow: cysteine 291-cysteine 372, cysteine 331-cysteine 356, and cysteine 333-cysteine 339. Histidine 316 serves as a coordination point for Zn(2+). Glutamate 317 is a catalytic residue. Residues histidine 320 and histidine 326 each coordinate Zn(2+). Ca(2+) is bound by residues cysteine 372 and asparagine 375. Positions proline 377–arginine 401 are excised as a propeptide. The Disintegrin domain occupies threonine 385–alanine 466. Cystine bridges form between cysteine 422-cysteine 428, cysteine 427-cysteine 452, and cysteine 440-cysteine 459. The Cell attachment site motif lies at arginine 444–aspartate 446.

Belongs to the venom metalloproteinase (M12B) family. P-II subfamily. P-IIa sub-subfamily. As to quaternary structure, monomer. Zn(2+) serves as cofactor. In terms of tissue distribution, expressed by the venom gland.

It localises to the secreted. In terms of biological role, impairs hemostasis in the envenomed animal. Functionally, inhibits platelet aggregation induced by ADP, thrombin, platelet-activating factor and collagen. Acts by inhibiting fibrinogen interaction with platelet receptors GPIIb/GPIIIa (ITGA2B/ITGB3). This Deinagkistrodon acutus (Hundred-pace snake) protein is Zinc metalloproteinase/disintegrin.